We begin with the raw amino-acid sequence, 151 residues long: MNLSQDGIKLHRGNFTAIGRQIQPYLEEGKCFRMVLKPWREKRSLSQNALSHMWYSEISEYLISRGKTFATPAWVKDALKHTYLGYETKDLVDVVTGDITTIQSLRHTSDLDTGEMYVFLCKVEAWAMNIGCHLTIPQSCEFQLLRDKQEA.

To equivalent protein in phage 82.

This is an uncharacterized protein from Escherichia coli (strain K12).